A 183-amino-acid polypeptide reads, in one-letter code: D-glycero-alpha-D-manno-heptose-1,7-bisphosphate 7-phosphatase (183 aa).

Zn(2+) contacts are provided by Cys-93, His-95, Cys-108, and Cys-110.

The protein belongs to the GmhB family.

The protein localises to the cytoplasm. It carries out the reaction D-glycero-alpha-D-manno-heptose 1,7-bisphosphate + H2O = D-glycero-alpha-D-manno-heptose 1-phosphate + phosphate. It functions in the pathway nucleotide-sugar biosynthesis; GDP-D-glycero-alpha-D-manno-heptose biosynthesis; GDP-D-glycero-alpha-D-manno-heptose from D-glycero-alpha-D-manno-heptose 7-phosphate: step 2/3. Converts the D-glycero-alpha-D-manno-heptose 1,7-bisphosphate intermediate into D-glycero-alpha-D-manno-heptose 1-phosphate by removing the phosphate group at the C-7 position. The chain is D-glycero-alpha-D-manno-heptose-1,7-bisphosphate 7-phosphatase (gmhB2) from Photorhabdus laumondii subsp. laumondii (strain DSM 15139 / CIP 105565 / TT01) (Photorhabdus luminescens subsp. laumondii).